We begin with the raw amino-acid sequence, 650 residues long: DNA mismatch repair protein MutL (650 aa).

The interval 374-420 (SSLPDTQRSQRQPEKAASGQRSSVDAGLSQGSSAHRASQTGLGQSGN) is disordered. Positions 392-420 (GQRSSVDAGLSQGSSAHRASQTGLGQSGN) are enriched in polar residues.

Belongs to the DNA mismatch repair MutL/HexB family.

Its function is as follows. This protein is involved in the repair of mismatches in DNA. It is required for dam-dependent methyl-directed DNA mismatch repair. May act as a 'molecular matchmaker', a protein that promotes the formation of a stable complex between two or more DNA-binding proteins in an ATP-dependent manner without itself being part of a final effector complex. In Shewanella amazonensis (strain ATCC BAA-1098 / SB2B), this protein is DNA mismatch repair protein MutL.